The sequence spans 84 residues: MERSRRKVLEGLVVSDKMQKTVVVSVETKSKHPIYRKLVISHKKYHAHNDNDDAKVGDLVEITETRPLSATKNWRVSKILERAR.

This sequence belongs to the universal ribosomal protein uS17 family. In terms of assembly, part of the 30S ribosomal subunit.

In terms of biological role, one of the primary rRNA binding proteins, it binds specifically to the 5'-end of 16S ribosomal RNA. In Ureaplasma parvum serovar 3 (strain ATCC 27815 / 27 / NCTC 11736), this protein is Small ribosomal subunit protein uS17.